Reading from the N-terminus, the 178-residue chain is Disulfide bond formation protein B (178 aa).

Over 1-14 the chain is Cytoplasmic; it reads MLSFFKTLSTKRSA. Residues 15 to 31 form a helical membrane-spanning segment; sequence WFLLFSSALLLEAIALY. The Periplasmic segment spans residues 32–49; sequence FQHGMGLAPCVMCIYERV. Cysteine 41 and cysteine 44 are oxidised to a cystine. Residues 50-65 traverse the membrane as a helical segment; sequence AILGIAFSGLLGLLYP. The Cytoplasmic portion of the chain corresponds to 66-72; sequence SSMLLRL. The chain crosses the membrane as a helical span at residues 73–90; sequence VALLIGLSSAIKGLMISI. Residues 91–145 are Periplasmic-facing; sequence THLDLQLYPAPWKQCSAVAEFPETLPLDQWFPALFLPSGSCSEVTWQFLGFSMVQ. Cysteine 105 and cysteine 131 form a disulfide bridge. Residues 146-164 form a helical membrane-spanning segment; that stretch reads WIVVIFALYTLLLALIFIS. Residues 165–177 lie on the Cytoplasmic side of the membrane; that stretch reads QVKRLKPKQRRLF.

It belongs to the DsbB family.

It localises to the cell inner membrane. Required for disulfide bond formation in some periplasmic proteins. Acts by oxidizing the DsbA protein. This Pasteurella multocida (strain Pm70) protein is Disulfide bond formation protein B.